An 82-amino-acid chain; its full sequence is Putative membrane protein insertion efficiency factor (82 aa).

The tract at residues 63–82 (GGFDPVPLKKDKNSKTTHHH) is disordered.

This sequence belongs to the UPF0161 family.

It is found in the cell membrane. Functionally, could be involved in insertion of integral membrane proteins into the membrane. This Staphylococcus epidermidis (strain ATCC 35984 / DSM 28319 / BCRC 17069 / CCUG 31568 / BM 3577 / RP62A) protein is Putative membrane protein insertion efficiency factor.